The sequence spans 117 residues: DNA-binding protein RdgB (117 aa).

Positions 82-102 (NHSALAKKYNVSLQWIYKIVR) form a DNA-binding region, H-T-H motif.

Belongs to the c/mor transcriptional regulatory family.

In terms of biological role, regulates pectin lyase production in response to DNA damage. The protein is DNA-binding protein RdgB (rdgB) of Pectobacterium carotovorum subsp. carotovorum (Erwinia carotovora subsp. carotovora).